A 338-amino-acid chain; its full sequence is Lipoate-protein ligase A (338 aa).

A BPL/LPL catalytic domain is found at 29–216; it reads PATQRVLFLW…AFFAHYGERV (188 aa). ATP-binding positions include Arg-71, 76–79, and Lys-134; that span reads GAVF. Residue Lys-134 coordinates (R)-lipoate.

Belongs to the LplA family. In terms of assembly, monomer.

The protein resides in the cytoplasm. It carries out the reaction L-lysyl-[lipoyl-carrier protein] + (R)-lipoate + ATP = N(6)-[(R)-lipoyl]-L-lysyl-[lipoyl-carrier protein] + AMP + diphosphate + H(+). The protein operates within protein modification; protein lipoylation via exogenous pathway; protein N(6)-(lipoyl)lysine from lipoate: step 1/2. It participates in protein modification; protein lipoylation via exogenous pathway; protein N(6)-(lipoyl)lysine from lipoate: step 2/2. Catalyzes both the ATP-dependent activation of exogenously supplied lipoate to lipoyl-AMP and the transfer of the activated lipoyl onto the lipoyl domains of lipoate-dependent enzymes. The protein is Lipoate-protein ligase A of Shigella sonnei (strain Ss046).